The primary structure comprises 396 residues: Flavohemoprotein (396 aa).

In terms of domain architecture, Globin spans M1–S136. H85 lines the heme b pocket. Residues Y95 and E135 each act as charge relay system in the active site. Residues G147 to I396 form a reductase region. The FAD-binding FR-type domain maps to R150–D255. FAD-binding positions include Y188 and R204 to S207. G268–P273 is an NADP(+) binding site. Residue C389 to P392 coordinates FAD.

This sequence belongs to the globin family. Two-domain flavohemoproteins subfamily. It in the C-terminal section; belongs to the flavoprotein pyridine nucleotide cytochrome reductase family. Requires heme b as cofactor. It depends on FAD as a cofactor.

It carries out the reaction 2 nitric oxide + NADPH + 2 O2 = 2 nitrate + NADP(+) + H(+). The catalysed reaction is 2 nitric oxide + NADH + 2 O2 = 2 nitrate + NAD(+) + H(+). Is involved in NO detoxification in an aerobic process, termed nitric oxide dioxygenase (NOD) reaction that utilizes O(2) and NAD(P)H to convert NO to nitrate, which protects the bacterium from various noxious nitrogen compounds. Therefore, plays a central role in the inducible response to nitrosative stress. The sequence is that of Flavohemoprotein from Yersinia pestis.